Here is a 345-residue protein sequence, read N- to C-terminus: uncharacterized protein (345 aa).

This is an uncharacterized protein from Acidianus filamentous virus 2 (isolate Italy/Pozzuoli) (AFV-2).